The sequence spans 139 residues: D-ribose pyranase (139 aa).

His20 acts as the Proton donor in catalysis. Substrate is bound by residues Asp28, His106, and 128–130; that span reads FAN.

It belongs to the RbsD / FucU family. RbsD subfamily. Homodecamer.

It localises to the cytoplasm. It carries out the reaction beta-D-ribopyranose = beta-D-ribofuranose. It participates in carbohydrate metabolism; D-ribose degradation; D-ribose 5-phosphate from beta-D-ribopyranose: step 1/2. In terms of biological role, catalyzes the interconversion of beta-pyran and beta-furan forms of D-ribose. The protein is D-ribose pyranase of Yersinia pseudotuberculosis serotype O:1b (strain IP 31758).